The chain runs to 145 residues: Chaperonin GroEL (145 aa).

Belongs to the chaperonin (HSP60) family. Forms a cylinder of 14 subunits composed of two heptameric rings stacked back-to-back. Interacts with the co-chaperonin GroES.

It localises to the cytoplasm. The enzyme catalyses ATP + H2O + a folded polypeptide = ADP + phosphate + an unfolded polypeptide.. Together with its co-chaperonin GroES, plays an essential role in assisting protein folding. The GroEL-GroES system forms a nano-cage that allows encapsulation of the non-native substrate proteins and provides a physical environment optimized to promote and accelerate protein folding. The protein is Chaperonin GroEL of Thermus thermophilus.